Reading from the N-terminus, the 39-residue chain is Cytochrome b559 subunit beta (39 aa).

A helical transmembrane segment spans residues 14–30 (WLAIHGLAVPTVFFLGS). Position 18 (His18) interacts with heme.

It belongs to the PsbE/PsbF family. In terms of assembly, heterodimer of an alpha subunit and a beta subunit. PSII is composed of 1 copy each of membrane proteins PsbA, PsbB, PsbC, PsbD, PsbE, PsbF, PsbH, PsbI, PsbJ, PsbK, PsbL, PsbM, PsbT, PsbX, PsbY, PsbZ, Psb30/Ycf12, at least 3 peripheral proteins of the oxygen-evolving complex and a large number of cofactors. It forms dimeric complexes. It depends on heme b as a cofactor.

The protein resides in the plastid. Its subcellular location is the chloroplast thylakoid membrane. Functionally, this b-type cytochrome is tightly associated with the reaction center of photosystem II (PSII). PSII is a light-driven water:plastoquinone oxidoreductase that uses light energy to abstract electrons from H(2)O, generating O(2) and a proton gradient subsequently used for ATP formation. It consists of a core antenna complex that captures photons, and an electron transfer chain that converts photonic excitation into a charge separation. This Staurastrum punctulatum (Green alga) protein is Cytochrome b559 subunit beta.